The sequence spans 939 residues: UvrABC system protein A (939 aa).

32–39 is a binding site for ATP; that stretch reads GLSGSGKS. The segment at 252–279 adopts a C4-type zinc-finger fold; sequence CPDCGISIGEISPSMFSFNAPFGKCDVC. ABC transporter domains follow at residues 309-588 and 608-936; these read WGEG…KESI and AGKN…QYLK. 640–647 contributes to the ATP binding site; sequence GVSGSGKS. A C4-type zinc finger spans residues 739–765; sequence CEACKGDGIVRIEMQFLSDVYVPCDVC.

The protein belongs to the ABC transporter superfamily. UvrA family. In terms of assembly, forms a heterotetramer with UvrB during the search for lesions.

The protein resides in the cytoplasm. Its function is as follows. The UvrABC repair system catalyzes the recognition and processing of DNA lesions. UvrA is an ATPase and a DNA-binding protein. A damage recognition complex composed of 2 UvrA and 2 UvrB subunits scans DNA for abnormalities. When the presence of a lesion has been verified by UvrB, the UvrA molecules dissociate. This Clostridium acetobutylicum (strain ATCC 824 / DSM 792 / JCM 1419 / IAM 19013 / LMG 5710 / NBRC 13948 / NRRL B-527 / VKM B-1787 / 2291 / W) protein is UvrABC system protein A.